Consider the following 301-residue polypeptide: uncharacterized protein (301 aa).

The signal sequence occupies residues 1 to 21 (MKIKLILVLIVFLTIVNVNNS). N-linked (GlcNAc...) asparagine glycans are attached at residues asparagine 19, asparagine 59, asparagine 102, and asparagine 180.

It is found in the secreted. This is an uncharacterized protein from Dictyostelium discoideum (Social amoeba).